The chain runs to 439 residues: 23S rRNA (uracil(1939)-C(5))-methyltransferase RlmD (439 aa).

Residues 1–54 (MTAPVLIESLDQEGRGVAHAEGKVIFIEGALPGEVVTYNAYRRKPSFELAQVGQ) enclose the TRAM domain. Positions 67, 73, 76, and 155 each coordinate [4Fe-4S] cluster. 6 residues coordinate S-adenosyl-L-methionine: Gln264, Phe293, Asn298, Glu314, Asn342, and Asp363. Catalysis depends on Cys391, which acts as the Nucleophile.

Belongs to the class I-like SAM-binding methyltransferase superfamily. RNA M5U methyltransferase family. RlmD subfamily.

The catalysed reaction is uridine(1939) in 23S rRNA + S-adenosyl-L-methionine = 5-methyluridine(1939) in 23S rRNA + S-adenosyl-L-homocysteine + H(+). In terms of biological role, catalyzes the formation of 5-methyl-uridine at position 1939 (m5U1939) in 23S rRNA. In Nitrosospira multiformis (strain ATCC 25196 / NCIMB 11849 / C 71), this protein is 23S rRNA (uracil(1939)-C(5))-methyltransferase RlmD.